The primary structure comprises 309 residues: Succinate dehydrogenase [ubiquinone] iron-sulfur subunit 3, mitochondrial (309 aa).

The N-terminal 22 residues, 1–22 (MSSVLRLLGRRICNPAAEKVRL), are a transit peptide targeting the mitochondrion. The 92-residue stretch at 69–160 (FKIYRWNPDK…PTIITPLPHM (92 aa)) folds into the 2Fe-2S ferredoxin-type domain. Residues cysteine 120, cysteine 125, and cysteine 140 each coordinate [2Fe-2S] cluster. Residues 202–232 (DRKKLDGLYECILCACCTTSCPSYWWNPEEF) form the 4Fe-4S ferredoxin-type domain. Residues cysteine 212, cysteine 215, and cysteine 218 each contribute to the [4Fe-4S] cluster site. Cysteine 222 serves as a coordination point for [3Fe-4S] cluster. Residue tryptophan 227 coordinates a ubiquinone. Positions 270 and 276 each coordinate [3Fe-4S] cluster. [4Fe-4S] cluster is bound at residue cysteine 280.

The protein belongs to the succinate dehydrogenase/fumarate reductase iron-sulfur protein family. As to quaternary structure, component of complex II composed of eight subunits in plants: four classical SDH subunits SDH1, SDH2, SDH3 and SDH4 (a flavoprotein (FP), an iron-sulfur protein (IP), and a cytochrome b composed of a large and a small subunit.), as well as four subunits unknown in mitochondria from bacteria and heterotrophic eukaryotes. [2Fe-2S] cluster is required as a cofactor. The cofactor is [3Fe-4S] cluster. It depends on [4Fe-4S] cluster as a cofactor.

The protein localises to the mitochondrion inner membrane. It catalyses the reaction a quinone + succinate = fumarate + a quinol. It participates in carbohydrate metabolism; tricarboxylic acid cycle; fumarate from succinate (eukaryal route): step 1/1. Functionally, iron-sulfur protein (IP) subunit of succinate dehydrogenase (SDH) that is involved in complex II of the mitochondrial electron transport chain and is responsible for transferring electrons from succinate to ubiquinone (coenzyme Q). This is Succinate dehydrogenase [ubiquinone] iron-sulfur subunit 3, mitochondrial (SDH2-3) from Arabidopsis thaliana (Mouse-ear cress).